The chain runs to 142 residues: Hemoglobin subunit alpha-1/2 (142 aa).

In terms of domain architecture, Globin spans 2–142; the sequence is VLSADDKTNI…VSTVLTSKYR (141 aa). Ser-4 carries the post-translational modification Phosphoserine. The residue at position 8 (Lys-8) is an N6-succinyllysine. At Thr-9 the chain carries Phosphothreonine. Lys-12 is subject to N6-succinyllysine. Lys-17 is subject to N6-acetyllysine; alternate. Lys-17 bears the N6-succinyllysine; alternate mark. Residue Tyr-25 is modified to Phosphotyrosine. Lys-41 carries the N6-succinyllysine modification. Ser-50 bears the Phosphoserine mark. His-59 is a binding site for O2. His-88 serves as a coordination point for heme b. At Ser-103 the chain carries Phosphoserine. Thr-109 is subject to Phosphothreonine. A phosphoserine mark is found at Ser-125 and Ser-132. Thr-135 and Thr-138 each carry phosphothreonine. Residue Ser-139 is modified to Phosphoserine.

This sequence belongs to the globin family. As to quaternary structure, heterotetramer of two alpha chains and two beta chains. Red blood cells.

In terms of biological role, involved in oxygen transport from the lung to the various peripheral tissues. Its function is as follows. Hemopressin acts as an antagonist peptide of the cannabinoid receptor CNR1. Hemopressin-binding efficiently blocks cannabinoid receptor CNR1 and subsequent signaling. This is Hemoglobin subunit alpha-1/2 (Hba1) from Rattus norvegicus (Rat).